A 423-amino-acid polypeptide reads, in one-letter code: Gamma-glutamyl phosphate reductase (423 aa).

Residues 1–14 (MTLQAAPRSAAAQQ) show a composition bias toward low complexity. Residues 1 to 25 (MTLQAAPRSAAAQQREPDLRQEVHD) form a disordered region. Over residues 15–25 (REPDLRQEVHD) the composition is skewed to basic and acidic residues.

This sequence belongs to the gamma-glutamyl phosphate reductase family.

It is found in the cytoplasm. The catalysed reaction is L-glutamate 5-semialdehyde + phosphate + NADP(+) = L-glutamyl 5-phosphate + NADPH + H(+). It participates in amino-acid biosynthesis; L-proline biosynthesis; L-glutamate 5-semialdehyde from L-glutamate: step 2/2. In terms of biological role, catalyzes the NADPH-dependent reduction of L-glutamate 5-phosphate into L-glutamate 5-semialdehyde and phosphate. The product spontaneously undergoes cyclization to form 1-pyrroline-5-carboxylate. The sequence is that of Gamma-glutamyl phosphate reductase from Mycobacterium ulcerans (strain Agy99).